The following is a 182-amino-acid chain: Large ribosomal subunit protein bL25 (182 aa).

This sequence belongs to the bacterial ribosomal protein bL25 family. CTC subfamily. In terms of assembly, part of the 50S ribosomal subunit; part of the 5S rRNA/L5/L18/L25 subcomplex. Contacts the 5S rRNA. Binds to the 5S rRNA independently of L5 and L18.

In terms of biological role, this is one of the proteins that binds to the 5S RNA in the ribosome where it forms part of the central protuberance. This chain is Large ribosomal subunit protein bL25, found in Borreliella burgdorferi (strain ATCC 35210 / DSM 4680 / CIP 102532 / B31) (Borrelia burgdorferi).